The primary structure comprises 97 residues: MEIKKTALAGTTESSDIQITLSKGNDGIDVDLTSDVKKQFGDQIVKVITDTLNKFQITNAKVRAVDKGALDCVIKARTITAASRALNQEDQINWEVL.

S14 is subject to O-(phosphoribosyl dephospho-coenzyme A)serine.

It belongs to the CitD family. Oligomer with a subunit composition of (alpha,beta,gamma)6.

The protein resides in the cytoplasm. Its function is as follows. Covalent carrier of the coenzyme of citrate lyase. In Oenococcus oeni (strain ATCC BAA-331 / PSU-1), this protein is Citrate lyase acyl carrier protein.